Reading from the N-terminus, the 247-residue chain is Chymase (247 aa).

The signal sequence occupies residues 1-17 (MCLLSLPLLLFLQYTRA). Residues 18-21 (KAGE) constitute a propeptide, activation peptide. Residues 22–245 (VIGGTECKPH…YRPWINKILK (224 aa)) enclose the Peptidase S1 domain. Cysteines 51 and 67 form a disulfide. The active-site Charge relay system is H66. Residue N103 is glycosylated (N-linked (GlcNAc...) asparagine). D110 (charge relay system) is an active-site residue. N121 carries an N-linked (GlcNAc...) asparagine glycan. Cystine bridges form between C144-C209 and C175-C188. The active-site Charge relay system is S203.

The protein belongs to the peptidase S1 family. Granzyme subfamily.

Its subcellular location is the secreted. The protein localises to the cytoplasmic granule. It catalyses the reaction Preferential cleavage: Phe-|-Xaa &gt; Tyr-|-Xaa &gt; Trp-|-Xaa &gt; Leu-|-Xaa.. Its function is as follows. Major secreted protease of mast cells with suspected roles in vasoactive peptide generation, extracellular matrix degradation, and regulation of gland secretion. The sequence is that of Chymase from Cavia porcellus (Guinea pig).